A 120-amino-acid polypeptide reads, in one-letter code: MAQPAAIIRIKNLRLRTFIGIKEEEINNRQDIVINVTIHYPADKARTSEDINDALNYRTVTKNIIQHVENNRFSLLEKLTQDVLDIAREHHWVTYAEVEIDKLHALRYADSVSMTLSWQR.

This sequence belongs to the DHNA family. As to quaternary structure, homooctamer.

The catalysed reaction is 7,8-dihydroneopterin 3'-triphosphate = 7,8-dihydromonapterin 3'-triphosphate. In terms of biological role, catalyzes the epimerization of carbon 2' of the side chain of 7,8-dihydroneopterin triphosphate (H2NTP) to form 7,8-dihydromonapterin triphosphate (H2MTP). Is required for tetrahydromonapterin biosynthesis. The protein is Dihydroneopterin triphosphate 2'-epimerase (folX) of Escherichia coli O157:H7.